Consider the following 478-residue polypeptide: MELPATKLRIGLVIFPLILLTIAPILYLFFGYPLYYSTSTYKHLSNSSSSSAISSPSRYNHSSSSSDSYKTEDSEPSSYDNDYDDTYHDPKSSSLHNNDRLSISSSNGHHQVTPKKEHRRKKRKRKCDIFSGEWIPNPKAPYYTNTTCRAIHEHQNCIKYGRPDLGFMKWRWKPKECDLPLFDPYEFLEIVRGTRMAFVGDSVSRNHVQSLICLLSRVEHPEGDSQQEFNFQRWKYKTYNFTIATFWTTHLVRAEETETGPTGPNSFYNLYLDEPDPTWASQIGEFDYIIISSGQWFFRPLFLFDKQKRIGCLYCYIPGVRNVGAHFAYRRALRTTFKTILGLENFKGEVFLRTFAPSHFEGGEWDKGGNCLKTRPYRSNETELDGMNLETHSIQLDEFRIANRDKNRNDGLNLRLLDVTQMMLLRPDGHPSRFGHKREDKVILYNDCVHWCLPGPIDSWNDFLLDMLKNRDLKRLKY.

A helical; Signal-anchor for type II membrane protein membrane pass occupies residues 10–30 (IGLVIFPLILLTIAPILYLFF). Over residues 50–68 (SSAISSPSRYNHSSSSSDS) the composition is skewed to low complexity. Residues 50–125 (SSAISSPSRY…KEHRRKKRKR (76 aa)) are disordered. Positions 92–110 (SSSLHNNDRLSISSSNGHH) are enriched in polar residues. The span at 112–125 (VTPKKEHRRKKRKR) shows a compositional bias: basic residues. The GDS motif motif lies at 200-202 (GDS). The DCXHWCLPGXXDXWN motif signature appears at 447–461 (DCVHWCLPGPIDSWN).

The protein belongs to the PC-esterase family. TBL subfamily.

Its subcellular location is the membrane. Functionally, may act as a bridging protein that binds pectin and other cell wall polysaccharides. Probably involved in maintaining esterification of pectins. May be involved in the specific O-acetylation of cell wall polymers. The protein is Protein trichome birefringence-like 20 (TBL20) of Arabidopsis thaliana (Mouse-ear cress).